The sequence spans 125 residues: Small ribosomal subunit protein uS12m (125 aa).

The tract at residues 1 to 51 is disordered; sequence MPTKNQLIRHGREEKRRTDRTRALDQCPQKQGVCPRVSTRTPKKPNSAPRK. A compositionally biased stretch (basic and acidic residues) spans 10-23; that stretch reads HGREEKRRTDRTRA.

The protein belongs to the universal ribosomal protein uS12 family.

The protein resides in the mitochondrion. Functionally, protein S12 is involved in the translation initiation step. This Nicotiana sylvestris (Wood tobacco) protein is Small ribosomal subunit protein uS12m (RPS12).